The following is a 213-amino-acid chain: CDP-diacylglycerol--inositol 3-phosphatidyltransferase (213 aa).

At 1–5 (MPEEN) the chain is on the cytoplasmic side. The helical transmembrane segment at 6 to 26 (IFLFVPNLIGYARIVFAIISF) threads the bilayer. A topological domain (lumenal) is located at residue tyrosine 27. The chain crosses the membrane as a helical span at residues 28-48 (FMPCCPFTASSFYLLSGLLDA). Residues aspartate 47 and aspartate 50 each contribute to the Mg(2+) site. The Cytoplasmic portion of the chain corresponds to 49–73 (FDGHAARALNQGTRFGAMLDMLTDR). Residues glycine 51, arginine 55, and threonine 61 each contribute to the a CDP-1,2-diacyl-sn-glycerol site. 2 residues coordinate Mg(2+): aspartate 68 and aspartate 72. Aspartate 72 functions as the Proton acceptor in the catalytic mechanism. The chain crosses the membrane as a helical span at residues 74–94 (CATMCLLVNLALLYPRATLLF). Residue glutamine 95 is a topological domain, lumenal. The helical transmembrane segment at 96 to 116 (LSMSLDVASHWLHLHSSVVRG) threads the bilayer. Residues 117–139 (SESHKMIDLSGNPVLRIYYTSRP) are Cytoplasmic-facing. A helical transmembrane segment spans residues 140 to 160 (ALFTLCAGNELFYCLLYLFNF). Residues 161 to 174 (SEGPLVGSVGLFRM) are Lumenal-facing. The chain crosses the membrane as a helical span at residues 175 to 195 (GLWITAPIALLKSIISVIHLV). Residues 196-213 (TAARNMAALDAADRAKKK) lie on the Cytoplasmic side of the membrane.

This sequence belongs to the CDP-alcohol phosphatidyltransferase class-I family. Requires Mn(2+) as cofactor. The cofactor is Mg(2+). As to expression, detected in liver (at protein level). Widely expressed. Highly expressed in the brain and kidney; lower levels in heart, spleen, lung, liver, skeletal muscle and testis.

It localises to the endoplasmic reticulum membrane. The protein resides in the cell membrane. It carries out the reaction a CDP-1,2-diacyl-sn-glycerol + myo-inositol = a 1,2-diacyl-sn-glycero-3-phospho-(1D-myo-inositol) + CMP + H(+). In terms of biological role, catalyzes the biosynthesis of phosphatidylinositol (PtdIns) as well as PtdIns:inositol exchange reaction. May thus act to reduce an excessive cellular PtdIns content. The exchange activity is due to the reverse reaction of PtdIns synthase and is dependent on CMP, which is tightly bound to the enzyme. The polypeptide is CDP-diacylglycerol--inositol 3-phosphatidyltransferase (Rattus norvegicus (Rat)).